We begin with the raw amino-acid sequence, 340 residues long: Heat-inducible transcription repressor HrcA (340 aa).

This sequence belongs to the HrcA family.

In terms of biological role, negative regulator of class I heat shock genes (grpE-dnaK-dnaJ and groELS operons). Prevents heat-shock induction of these operons. The chain is Heat-inducible transcription repressor HrcA from Chromobacterium violaceum (strain ATCC 12472 / DSM 30191 / JCM 1249 / CCUG 213 / NBRC 12614 / NCIMB 9131 / NCTC 9757 / MK).